Here is a 318-residue protein sequence, read N- to C-terminus: Ribosomal protein L11 methyltransferase (318 aa).

Residues T159, G180, D202, and N253 each coordinate S-adenosyl-L-methionine.

Belongs to the methyltransferase superfamily. PrmA family.

It localises to the cytoplasm. It catalyses the reaction L-lysyl-[protein] + 3 S-adenosyl-L-methionine = N(6),N(6),N(6)-trimethyl-L-lysyl-[protein] + 3 S-adenosyl-L-homocysteine + 3 H(+). Functionally, methylates ribosomal protein L11. This chain is Ribosomal protein L11 methyltransferase, found in Lachnospira eligens (strain ATCC 27750 / DSM 3376 / VPI C15-48 / C15-B4) (Eubacterium eligens).